The following is a 126-amino-acid chain: Alpha-1-purothionin (126 aa).

The N-terminal stretch at 1 to 16 is a signal peptide; sequence CLLILGLVLEQLQVEG. Cystine bridges form between Cys19/Cys55, Cys20/Cys47, Cys28/Cys45, and Cys32/Cys41. The propeptide at 62–126 is acidic domain; the sequence is LALESNSDEP…DAGLPSLDAY (65 aa).

This sequence belongs to the plant thionin (TC 1.C.44) family. 4 C-C subfamily.

The protein resides in the secreted. Thionins are small plant proteins which are toxic to animal cells. They seem to exert their toxic effect at the level of the cell membrane. Their precise function is not known. This chain is Alpha-1-purothionin (THI1.1), found in Triticum aestivum (Wheat).